Reading from the N-terminus, the 1201-residue chain is Coatomer subunit alpha (1201 aa).

6 WD repeats span residues 9–39, 51–81, 93–123, 135–165, 207–237, and 251–281; these read SKST…QLWD, DHEG…KVWS, GHLD…RIWN, GHNH…RIWD, GHTR…KLWR, and GHTN…RVWD. The interval 842 to 862 is disordered; the sequence is AVNTTQEQEEPLGEENFNDED. Over residues 848-862 the composition is skewed to acidic residues; that stretch reads EQEEPLGEENFNDED.

As to quaternary structure, oligomeric complex that consists of at least the alpha, beta, beta', gamma, delta, epsilon and zeta subunits. Interacts with the ESCRT-0 subunit VPS27. Interacts with KEI1 (via C-terminal region).

The protein localises to the cytoplasm. The protein resides in the golgi apparatus membrane. It localises to the cytoplasmic vesicle. It is found in the COPI-coated vesicle membrane. The coatomer is a cytosolic protein complex that binds to dilysine motifs and reversibly associates with Golgi non-clathrin-coated vesicles, which further mediate biosynthetic protein transport from the ER, via the Golgi up to the trans Golgi network. Coatomer complex is required for budding from Golgi membranes, and is essential for the retrograde Golgi-to-ER transport of dilysine-tagged proteins. The protein is Coatomer subunit alpha (COP1) of Saccharomyces cerevisiae (strain ATCC 204508 / S288c) (Baker's yeast).